The following is a 345-amino-acid chain: Nuclear distribution protein nudE-like 1 (345 aa).

A coiled-coil region spans residues 27 to 190 (KQTFQEARDE…LAVRERQQEV (164 aa)). The segment at 56-166 (VQAEQRNRDL…LDEKESLLVS (111 aa)) is self-association. The tract at residues 64 to 189 (DLQADNQRLK…ELAVRERQQE (126 aa)) is interaction with KATNB1. The interval 114-133 (YVRELEQANDDLERAKRATI) is required for interaction with PAFAH1B1. Residues 175–345 (RDLRQELAVR…SAPGMLPLSV (171 aa)) are interaction with CENPF. The interval 189 to 256 (EVTRKSAPSS…SARISALNIV (68 aa)) is interaction with YWHAE. The segment at 191–345 (TRKSAPSSPT…SAPGMLPLSV (155 aa)) is interaction with NEFL. Residues 195-256 (APSSPTLDCE…SARISALNIV (62 aa)) are interaction with KATNA1. At Ser215 the chain carries Phosphoserine. The segment at 217-240 (PATPVGKGTENSFPSPKAIPNGFG) is disordered. The residue at position 219 (Thr219) is a Phosphothreonine; by CDK1 and MAPK1. The interval 227-278 (NSFPSPKAIPNGFGTSPLTPSARISALNIVGDLLRKVGALESKLAACRNFAK) is interaction with DISC1. Position 231 is a phosphoserine (Ser231). Ser242 carries the phosphoserine; by CDK1 modification. Position 245 is a phosphothreonine; by CDK1 and MAPK1 (Thr245). The tract at residues 256–291 (VGDLLRKVGALESKLAACRNFAKDQASRKSYISGNV) is required for localization to the centrosome and interaction with dynein, dynactin, tubulin gamma, PCM1 and PCNT. The S-palmitoyl cysteine; by ZDHHC2, ZDHHC3 and ZDHHC7 moiety is linked to residue Cys273. The disordered stretch occupies residues 316 to 345 (AVNGFDPAPPPPGLGSSRPLSAPGMLPLSV). Residues 329 to 339 (LGSSRPLSAPG) are compositionally biased toward low complexity. The residue at position 344 (Ser344) is a Phosphoserine.

Belongs to the nudE family. In terms of assembly, self-associates. Interacts with DISC1, dynein, dynactin, tubulin gamma, KATNA1, KATNB1, microtubules, PAFAH1B1, PCM1, PCNT, and YWHAE. Interacts directly with NEFL and indirectly with NEFH. Interacts (via C-terminus) with CENPF. Interacts with ZNF365. Interacts with PLEKHM1 (via N- and C-terminus). Interacts with GTP-bound RAB9A; the interaction may lead to RAB9A-dynein motor tethering. Phosphorylated in mitosis. Can be phosphorylated by CDK1, CDK5 and MAPK1. Phosphorylation by CDK5 promotes interaction with KATNA1 and YWHAE. Post-translationally, palmitoylation at Cys-273 reduces affinity for dynein. As to expression, expressed at low levels in heart, hypothalamus, liver, lung, spleen and stomach. Expressed at higher levels in testis and brain. Within the brain, expressed in cerebellum, cerebral stem, cortex and striatum.

The protein resides in the cytoplasm. It localises to the cytoskeleton. Its subcellular location is the microtubule organizing center. The protein localises to the centrosome. It is found in the chromosome. The protein resides in the centromere. It localises to the kinetochore. Its subcellular location is the spindle. In terms of biological role, required for organization of the cellular microtubule array and microtubule anchoring at the centrosome. May regulate microtubule organization at least in part by targeting the microtubule severing protein KATNA1 to the centrosome. Also positively regulates the activity of the minus-end directed microtubule motor protein dynein. May enhance dynein-mediated microtubule sliding by targeting dynein to the microtubule plus ends. Required for several dynein- and microtubule-dependent processes such as the maintenance of Golgi integrity, the centripetal motion of secretory vesicles and the coupling of the nucleus and centrosome. Also required during brain development for the migration of newly formed neurons from the ventricular/subventricular zone toward the cortical plate. Plays a role, together with DISC1, in the regulation of neurite outgrowth. Required for mitosis in some cell types but appears to be dispensible for mitosis in cortical neuronal progenitors, which instead requires NDE1. Facilitates the polymerization of neurofilaments from the individual subunits NEFH and NEFL. Positively regulates lysosome peripheral distribution and ruffled border formation in osteoclasts. Plays a role, together with DISC1, in the regulation of neurite outgrowth. May act as a RAB9A/B effector that tethers RAB9-associated late endosomes to the dynein motor for their retrograde transport to the trans-Golgi network. The polypeptide is Nuclear distribution protein nudE-like 1 (NDEL1) (Oryctolagus cuniculus (Rabbit)).